The chain runs to 66 residues: MSQPLTVECPTCGAPVEWKSDNKYRPFCSDRCKLIDLGAWAAEEHAIPGDTLEDDIFSADLPPREH.

Positions 9, 12, 28, and 32 each coordinate Zn(2+).

It belongs to the DNA gyrase inhibitor YacG family. Interacts with GyrB. Zn(2+) is required as a cofactor.

In terms of biological role, inhibits all the catalytic activities of DNA gyrase by preventing its interaction with DNA. Acts by binding directly to the C-terminal domain of GyrB, which probably disrupts DNA binding by the gyrase. In Pseudomonas aeruginosa (strain LESB58), this protein is DNA gyrase inhibitor YacG.